Reading from the N-terminus, the 423-residue chain is WD repeat and SOCS box-containing protein 1 (423 aa).

The tract at residues 76–100 is disordered; that stretch reads DRSSGAGPRRLSRQNSEGSLLPGEP. WD repeat units follow at residues 125-166, 169-209, 213-252, 255-294, and 310-347; these read SRCV…LLLN, DHTD…NMVK, GHQN…LIRK, GHHN…VLLE, and ANDR…KSPQ. The region spanning 373 to 423 is the SOCS box domain; the sequence is DGSVHFWASPRSIASLQHLCRMTLRRVMPTQQVYTLPIPFSMQDYLAYKTL.

In terms of assembly, component of a probable ECS E3 ubiquitin-protein ligase complex that contains the Elongin BC complex.

The protein operates within protein modification; protein ubiquitination. In terms of biological role, probable substrate-recognition component of a SCF-like ECS (Elongin-Cullin-SOCS-box protein) E3 ubiquitin-protein ligase complex which mediates the ubiquitination and subsequent proteasomal degradation of target proteins. This is WD repeat and SOCS box-containing protein 1 (wsb1) from Danio rerio (Zebrafish).